We begin with the raw amino-acid sequence, 85 residues long: uncharacterized protein (85 aa).

This is an uncharacterized protein from Bacillus subtilis (strain 168).